The sequence spans 347 residues: Ileal sodium/bile acid cotransporter (347 aa).

At 1–29 (MSNLTVGCLANATVCEGASCVAPESNFNA) the chain is on the extracellular side. Residues asparagine 3 and asparagine 11 are each glycosylated (N-linked (GlcNAc...) asparagine). A helical transmembrane segment spans residues 30–50 (ILSVVLSTVLTILLALVMFSM). Residues 51-83 (GCNVEIKKFLGHIRRPWGIFIGFLCQFGIMPLT) are Cytoplasmic-facing. The helical transmembrane segment at 84 to 104 (GFVLAVAFGIMPIQAVVVLIM) threads the bilayer. Over 105-127 (GCCPGGTASNILAYWVDGDMDLS) the chain is Extracellular. Residues 128 to 148 (VSMTTCSTLLALGMMPLCLYV) traverse the membrane as a helical segment. Topologically, residues 149–158 (YTKMWVDSGT) are cytoplasmic. The chain crosses the membrane as a helical span at residues 159–179 (IVIPYDNIGTSLVALVVPVSI). The Extracellular segment spans residues 180–196 (GMFVNHKWPQKAKIILK). A helical transmembrane segment spans residues 197 to 217 (VGSIAGAVLIVLIAVVGGILY). The Cytoplasmic portion of the chain corresponds to 218–225 (QSAWIIEP). The helical transmembrane segment at 226–246 (KLWIIGTIFPMAGYSLGFFLA) threads the bilayer. Topologically, residues 247–289 (RIAGQPWYRCRTVALETGMQNTQLCSTIVQLSFSPEDLTYVFT) are extracellular. A helical transmembrane segment spans residues 290–310 (FPLIYSIFQIAFAAIFLGIYV). Residues 311 to 347 (AYRKCHGKNDAEFPDIKDTKTEPESSFHQMNGGFQPE) lie on the Cytoplasmic side of the membrane. Residues 323–335 (FPDIKDTKTEPES) show a composition bias toward basic and acidic residues. The disordered stretch occupies residues 323-347 (FPDIKDTKTEPESSFHQMNGGFQPE). A Phosphoserine modification is found at serine 336.

The protein belongs to the bile acid:sodium symporter (BASS) (TC 2.A.28) family. Monomer and homodimer.

Its subcellular location is the membrane. The catalysed reaction is taurocholate(out) + 2 Na(+)(out) = taurocholate(in) + 2 Na(+)(in). The enzyme catalyses cholate(out) + 2 Na(+)(out) = cholate(in) + 2 Na(+)(in). It catalyses the reaction taurochenodeoxycholate(out) + 2 Na(+)(out) = taurochenodeoxycholate(in) + 2 Na(+)(in). It carries out the reaction tauroursodeoxycholate(out) + 2 Na(+)(out) = tauroursodeoxycholate(in) + 2 Na(+)(in). The catalysed reaction is glycocholate(out) + 2 Na(+)(out) = glycocholate(in) + 2 Na(+)(in). The enzyme catalyses tauronorcholate(out) + 2 Na(+)(out) = tauronorcholate(in) + 2 Na(+)(in). It catalyses the reaction tauroallocholate(out) + 2 Na(+)(out) = tauroallocholate(in) + 2 Na(+)(in). It carries out the reaction taurodeoxycholate(out) + 2 Na(+)(out) = taurodeoxycholate(in) + 2 Na(+)(in). The catalysed reaction is tauro-beta-muricholate(out) + 2 Na(+)(out) = tauro-beta-muricholate(in) + 2 Na(+)(in). Plays a critical role in the sodium-dependent reabsorption of bile acids from the lumen of the small intestine. Transports various bile acids, unconjugated or conjugated, such as cholate and taurocholate. Also responsible for bile acid transport in the renal proximal tubules, a salvage mechanism that helps conserve bile acids. Works collaboratively with the Na(+)-taurocholate cotransporting polypeptide (NTCP), the organic solute transporter (OST), and the bile salt export pump (BSEP), to ensure efficacious biological recycling of bile acids during enterohepatic circulation. This chain is Ileal sodium/bile acid cotransporter (SLC10A2), found in Oryctolagus cuniculus (Rabbit).